The primary structure comprises 245 residues: Carboxy-S-adenosyl-L-methionine synthase (245 aa).

S-adenosyl-L-methionine is bound by residues Tyr42, 67–69 (GCS), 92–93 (DN), 120–121 (DI), Asn135, and Arg202.

This sequence belongs to the class I-like SAM-binding methyltransferase superfamily. Cx-SAM synthase family. In terms of assembly, homodimer.

It catalyses the reaction prephenate + S-adenosyl-L-methionine = carboxy-S-adenosyl-L-methionine + 3-phenylpyruvate + H2O. Functionally, catalyzes the conversion of S-adenosyl-L-methionine (SAM) to carboxy-S-adenosyl-L-methionine (Cx-SAM). This chain is Carboxy-S-adenosyl-L-methionine synthase, found in Vibrio campbellii (strain ATCC BAA-1116).